Here is an 81-residue protein sequence, read N- to C-terminus: Putative membrane protein insertion efficiency factor (81 aa).

The interval 60-81 is disordered; it reads WNPGGYDPVPTHNTSNSSPMAE. The segment covering 70–81 has biased composition (polar residues); sequence THNTSNSSPMAE.

This sequence belongs to the UPF0161 family.

It is found in the cell inner membrane. Its function is as follows. Could be involved in insertion of integral membrane proteins into the membrane. This is Putative membrane protein insertion efficiency factor from Stutzerimonas stutzeri (strain A1501) (Pseudomonas stutzeri).